The following is a 750-amino-acid chain: Catalase-peroxidase 1 (750 aa).

Residues 90-238 constitute a cross-link (tryptophyl-tyrosyl-methioninium (Trp-Tyr) (with M-264)); it reads WHSAGTYRVM…VSAAHMGLIY (149 aa). The active-site Proton acceptor is the His91. Positions 199–218 are disordered; sequence NEGHKESGVIDGSESKKGHK. Basic and acidic residues predominate over residues 200–218; sequence EGHKESGVIDGSESKKGHK. Residues 238–264 constitute a cross-link (tryptophyl-tyrosyl-methioninium (Tyr-Met) (with W-90)); it reads YVNPEGPDGIPDPVAAARDIRTTFSRM. His279 serves as a coordination point for heme b.

This sequence belongs to the peroxidase family. Peroxidase/catalase subfamily. As to quaternary structure, homodimer or homotetramer. Predominantly homodimeric. Heme b serves as cofactor. Formation of the three residue Trp-Tyr-Met cross-link is important for the catalase, but not the peroxidase activity of the enzyme.

It localises to the cytoplasm. The catalysed reaction is H2O2 + AH2 = A + 2 H2O. The enzyme catalyses 2 H2O2 = O2 + 2 H2O. Its function is as follows. Bifunctional enzyme with both catalase and broad-spectrum peroxidase activity. This chain is Catalase-peroxidase 1, found in Pyricularia oryzae (strain 70-15 / ATCC MYA-4617 / FGSC 8958) (Rice blast fungus).